The following is a 361-amino-acid chain: uncharacterized protein (361 aa).

ATP is bound at residue 41-48; sequence GPLNSGKT.

It belongs to the archaeal ATPase family.

This is an uncharacterized protein from Methanocaldococcus jannaschii (strain ATCC 43067 / DSM 2661 / JAL-1 / JCM 10045 / NBRC 100440) (Methanococcus jannaschii).